The sequence spans 445 residues: UPF0210 protein LACR_1020 (445 aa).

The protein belongs to the UPF0210 family. In terms of assembly, homodimer.

This chain is UPF0210 protein LACR_1020, found in Lactococcus lactis subsp. cremoris (strain SK11).